The chain runs to 871 residues: DNA mismatch repair protein MutS (871 aa).

605 to 612 (GPNMGGKS) provides a ligand contact to ATP. A disordered region spans residues 791 to 840 (PQRPTSASVEQPVDSAKTETAATAEEPQQLSLFPTDEETKPKQPTKKERS). Residues 827-840 (EETKPKQPTKKERS) are compositionally biased toward basic and acidic residues.

This sequence belongs to the DNA mismatch repair MutS family.

Its function is as follows. This protein is involved in the repair of mismatches in DNA. It is possible that it carries out the mismatch recognition step. This protein has a weak ATPase activity. This is DNA mismatch repair protein MutS from Shouchella clausii (strain KSM-K16) (Alkalihalobacillus clausii).